A 514-amino-acid chain; its full sequence is Threonine synthase (514 aa).

N6-(pyridoxal phosphate)lysine is present on K124. Pyridoxal 5'-phosphate contacts are provided by G277, N278, F279, D281, and T449. A Phosphoserine modification is found at S467.

It belongs to the threonine synthase family. Pyridoxal 5'-phosphate serves as cofactor.

The enzyme catalyses O-phospho-L-homoserine + H2O = L-threonine + phosphate. It functions in the pathway amino-acid biosynthesis; L-threonine biosynthesis; L-threonine from L-aspartate: step 5/5. Catalyzes the gamma-elimination of phosphate from L-phosphohomoserine and the beta-addition of water to produce L-threonine. The polypeptide is Threonine synthase (THR4) (Saccharomyces cerevisiae (strain ATCC 204508 / S288c) (Baker's yeast)).